The following is a 435-amino-acid chain: Methylenetetrahydrofolate--tRNA-(uracil-5-)-methyltransferase TrmFO (435 aa).

Residue 7-12 participates in FAD binding; the sequence is GAGLAG.

The protein belongs to the MnmG family. TrmFO subfamily. Requires FAD as cofactor.

It is found in the cytoplasm. The catalysed reaction is uridine(54) in tRNA + (6R)-5,10-methylene-5,6,7,8-tetrahydrofolate + NADH + H(+) = 5-methyluridine(54) in tRNA + (6S)-5,6,7,8-tetrahydrofolate + NAD(+). It carries out the reaction uridine(54) in tRNA + (6R)-5,10-methylene-5,6,7,8-tetrahydrofolate + NADPH + H(+) = 5-methyluridine(54) in tRNA + (6S)-5,6,7,8-tetrahydrofolate + NADP(+). Functionally, catalyzes the folate-dependent formation of 5-methyl-uridine at position 54 (M-5-U54) in all tRNAs. In Thermotoga petrophila (strain ATCC BAA-488 / DSM 13995 / JCM 10881 / RKU-1), this protein is Methylenetetrahydrofolate--tRNA-(uracil-5-)-methyltransferase TrmFO.